Reading from the N-terminus, the 404-residue chain is Inosine-5'-monophosphate dehydrogenase (404 aa).

NAD(+)-binding positions include Asp172 and 222 to 224; that span reads GIG. The K(+) site is built by Gly224 and Gly226. IMP is bound at residue Ser227. Cys229 serves as a coordination point for K(+). Cys229 acts as the Thioimidate intermediate in catalysis. IMP is bound by residues 262–264, 285–286, and 309–313; these read DGG, GN, and YVGMG. Residue Arg325 is the Proton acceptor of the active site. IMP is bound at residue Glu340. Positions 394, 395, and 396 each coordinate K(+).

The protein belongs to the IMPDH/GMPR family. As to quaternary structure, homotetramer. Requires K(+) as cofactor.

The enzyme catalyses IMP + NAD(+) + H2O = XMP + NADH + H(+). Its pathway is purine metabolism; XMP biosynthesis via de novo pathway; XMP from IMP: step 1/1. Mycophenolic acid (MPA) is a non-competitive inhibitor that prevents formation of the closed enzyme conformation by binding to the same site as the amobile flap. In contrast, mizoribine monophosphate (MZP) is a competitive inhibitor that induces the closed conformation. MPA is a potent inhibitor of mammalian IMPDHs but a poor inhibitor of the bacterial enzymes. MZP is a more potent inhibitor of bacterial IMPDH. In terms of biological role, catalyzes the conversion of inosine 5'-phosphate (IMP) to xanthosine 5'-phosphate (XMP), the first committed and rate-limiting step in the de novo synthesis of guanine nucleotides, and therefore plays an important role in the regulation of cell growth. Essential for mouse infection by tick bite and critical for the survival in environments that appear to lack sufficient amounts of guanine, guanosine, and/or deoxyguanosine to support spirochete growth, such as mammalian host tissues. This chain is Inosine-5'-monophosphate dehydrogenase, found in Borreliella burgdorferi (strain ATCC 35210 / DSM 4680 / CIP 102532 / B31) (Borrelia burgdorferi).